We begin with the raw amino-acid sequence, 553 residues long: Hydroxylamine reductase (553 aa).

The [2Fe-2S] cluster site is built by C3, C6, C18, and C25. H249, E273, C317, C405, C433, C459, E493, and K495 together coordinate hybrid [4Fe-2O-2S] cluster. A Cysteine persulfide modification is found at C405.

This sequence belongs to the HCP family. Requires [2Fe-2S] cluster as cofactor. It depends on hybrid [4Fe-2O-2S] cluster as a cofactor.

The protein resides in the cytoplasm. It carries out the reaction A + NH4(+) + H2O = hydroxylamine + AH2 + H(+). In terms of biological role, catalyzes the reduction of hydroxylamine to form NH(3) and H(2)O. This is Hydroxylamine reductase from Mannheimia succiniciproducens (strain KCTC 0769BP / MBEL55E).